Consider the following 323-residue polypeptide: Ferrochelatase (323 aa).

2 residues coordinate Fe cation: H195 and E276.

Belongs to the ferrochelatase family.

It is found in the cytoplasm. It carries out the reaction heme b + 2 H(+) = protoporphyrin IX + Fe(2+). It functions in the pathway porphyrin-containing compound metabolism; protoheme biosynthesis; protoheme from protoporphyrin-IX: step 1/1. In terms of biological role, catalyzes the ferrous insertion into protoporphyrin IX. The protein is Ferrochelatase of Mannheimia succiniciproducens (strain KCTC 0769BP / MBEL55E).